A 341-amino-acid chain; its full sequence is NADH-quinone oxidoreductase subunit H 2 (341 aa).

A run of 8 helical transmembrane segments spans residues 13-33 (IIVIGQSVLLLVLLLISIAYI), 82-102 (GVFLLAPLVTCVLALAAWAVI), 115-135 (VGVLYILAVSSLSVYGIIMAG), 161-181 (IGFVVICVLLCVGSLNLTAIV), 190-210 (MLGWYWLPLFPMFVVFYVSAL), 248-268 (YVAIVTMCAMGTILFLGGWLP), 277-297 (WVPGIVWFALKVLFMFFLFAM), and 317-337 (VFLPLSLAMVVIVAAVLQFAG).

Belongs to the complex I subunit 1 family. In terms of assembly, NDH-1 is composed of 14 different subunits. Subunits NuoA, H, J, K, L, M, N constitute the membrane sector of the complex.

It is found in the cell inner membrane. It catalyses the reaction a quinone + NADH + 5 H(+)(in) = a quinol + NAD(+) + 4 H(+)(out). In terms of biological role, NDH-1 shuttles electrons from NADH, via FMN and iron-sulfur (Fe-S) centers, to quinones in the respiratory chain. The immediate electron acceptor for the enzyme in this species is believed to be ubiquinone. Couples the redox reaction to proton translocation (for every two electrons transferred, four hydrogen ions are translocated across the cytoplasmic membrane), and thus conserves the redox energy in a proton gradient. This subunit may bind ubiquinone. The sequence is that of NADH-quinone oxidoreductase subunit H 2 from Rhodopseudomonas palustris (strain BisB5).